Reading from the N-terminus, the 77-residue chain is Defensin-like protein (77 aa).

The signal sequence occupies residues 1–30 (MERGMRLFSSLVLVLLLVTATEMGPKVAEA). Disulfide bonds link Cys-33–Cys-77, Cys-44–Cys-64, Cys-50–Cys-71, and Cys-54–Cys-73.

It belongs to the DEFL family.

Its subcellular location is the secreted. The chain is Defensin-like protein from Nelumbo nucifera (Sacred lotus).